We begin with the raw amino-acid sequence, 564 residues long: Bifunctional protein CrtB/UppS (564 aa).

Asp329 is a catalytic residue. Asp329 lines the Mg(2+) pocket. Substrate is bound by residues Gly330–Arg333, Trp334, His346, and Ser374–Glu376. Asn377 functions as the Proton acceptor in the catalytic mechanism. Residues Trp378, Arg380, Arg497, and Arg502 to Ser504 each bind substrate. Glu515 is a binding site for Mg(2+).

It in the N-terminal section; belongs to the phytoene/squalene synthase family. In the C-terminal section; belongs to the UPP synthase family. Homodimer. The cofactor is Mg(2+).

The enzyme catalyses 2 (2E,6E,10E)-geranylgeranyl diphosphate = 15-cis-phytoene + 2 diphosphate. Its pathway is carotenoid biosynthesis; phytoene biosynthesis; all-trans-phytoene from geranylgeranyl diphosphate: step 1/1. Catalyzes the reaction from prephytoene diphosphate to phytoene. In terms of biological role, catalyzes the condensation of isopentenyl diphosphate (IPP) with allylic pyrophosphates generating different type of terpenoids. The polypeptide is Bifunctional protein CrtB/UppS (crtB/uppS3) (Streptomyces coelicolor (strain ATCC BAA-471 / A3(2) / M145)).